The following is a 36-amino-acid chain: MTTLNFPSVLVPLVGLVFPAIAMASLFLHVQKNKIV.

A helical membrane pass occupies residues S8–L28.

This sequence belongs to the PsaI family.

Its subcellular location is the plastid. The protein resides in the chloroplast thylakoid membrane. In terms of biological role, may help in the organization of the PsaL subunit. This chain is Photosystem I reaction center subunit VIII, found in Helianthus annuus (Common sunflower).